A 233-amino-acid chain; its full sequence is Archaetidylserine synthase (233 aa).

8 helical membrane passes run 7 to 27 (ITSF…SGYL), 29 to 49 (ILLS…LAVL), 75 to 95 (SLSD…SAAV), 102 to 122 (ILVG…FNVL), 126 to 146 (GKNF…SFYL), 147 to 167 (TGFY…VLMI), 180 to 200 (ASTA…VEIL), and 206 to 226 (VAGP…AVPI).

The protein belongs to the CDP-alcohol phosphatidyltransferase class-I family.

Its subcellular location is the membrane. It catalyses the reaction CDP-2,3-bis-O-(geranylgeranyl)-sn-glycerol + L-serine = archaetidylserine + CMP + H(+). The catalysed reaction is CDP-2,3-bis-O-(phytanyl)-sn-glycerol + L-serine = 2,3-bis-O-phytanyl-sn-glycero-3-phospho-L-serine + CMP + H(+). It functions in the pathway membrane lipid metabolism; glycerophospholipid metabolism. Its activity is regulated as follows. Activated by Mn(2+) ions. Involved in the lipid biosynthesis. Catalyzes the formation of unsaturated archaetidylserine from CDP-unsaturated archaeol and L-serine. Activity with ester-linked substrate analogs containing straight aliphatic chains (typical bacterial substrates) is two to three times higher than that with the corresponding ether-type substrate (typical archaeal substrates). Both enantiomers of CDP-unsaturated archaeols with ether-linked geranylgeranyl chains and CDP-saturated archaeol with ether-linked phytanyl chains are similarly active. The enzyme also accepts D-serine, although activity is only about third of that with L-serine. The chain is Archaetidylserine synthase from Methanothermobacter thermautotrophicus (strain ATCC 29096 / DSM 1053 / JCM 10044 / NBRC 100330 / Delta H) (Methanobacterium thermoautotrophicum).